Here is a 558-residue protein sequence, read N- to C-terminus: S-layer protein (558 aa).

The first 28 residues, 1–28, serve as a signal peptide directing secretion; it reads MAMSLKKIGAIAVGGAMVATALASGVAA. 7 N-linked (GlcNAc...) asparagine glycosylation sites follow: N112, N138, N158, N197, N226, N291, and N374.

Belongs to the Mj S-layer protein family.

Its subcellular location is the secreted. It is found in the cell wall. It localises to the S-layer. Functionally, S-layer protein. The S-layer is a paracrystalline mono-layered assembly of proteins which coat the surface of the cell. This Methanocaldococcus jannaschii (strain ATCC 43067 / DSM 2661 / JAL-1 / JCM 10045 / NBRC 100440) (Methanococcus jannaschii) protein is S-layer protein (sla).